The sequence spans 463 residues: Asparagine--tRNA ligase (463 aa).

This sequence belongs to the class-II aminoacyl-tRNA synthetase family. Homodimer.

It localises to the cytoplasm. The catalysed reaction is tRNA(Asn) + L-asparagine + ATP = L-asparaginyl-tRNA(Asn) + AMP + diphosphate + H(+). This chain is Asparagine--tRNA ligase, found in Clostridium kluyveri (strain ATCC 8527 / DSM 555 / NBRC 12016 / NCIMB 10680 / K1).